Here is a 168-residue protein sequence, read N- to C-terminus: Phosphopantetheine adenylyltransferase (168 aa).

Thr-14 contributes to the substrate binding site. ATP-binding positions include 14 to 15 (TF) and His-22. 3 residues coordinate substrate: Lys-46, Leu-78, and Arg-92. Residues 93–95 (GLR), Glu-103, and 128–134 (YSFISSS) each bind ATP.

It belongs to the bacterial CoaD family. In terms of assembly, homohexamer. The cofactor is Mg(2+).

It localises to the cytoplasm. The catalysed reaction is (R)-4'-phosphopantetheine + ATP + H(+) = 3'-dephospho-CoA + diphosphate. It functions in the pathway cofactor biosynthesis; coenzyme A biosynthesis; CoA from (R)-pantothenate: step 4/5. In terms of biological role, reversibly transfers an adenylyl group from ATP to 4'-phosphopantetheine, yielding dephospho-CoA (dPCoA) and pyrophosphate. The polypeptide is Phosphopantetheine adenylyltransferase (Xanthomonas campestris pv. campestris (strain 8004)).